A 465-amino-acid polypeptide reads, in one-letter code: GTPase Der (465 aa).

EngA-type G domains follow at residues 3–166 and 184–358; these read FLVA…LNEY and IHFS…ACAN. Residues 9–16, 56–60, 118–121, 190–197, 237–241, and 302–305 each bind GTP; these read GRANVGKS, DTGGI, NKVD, GRPNVGKS, DTAGV, and NKWD. A KH-like domain is found at 359 to 443; the sequence is KKITTADATR…PIVFEFKQSE (85 aa). The tract at residues 446-465 is disordered; the sequence is FADRKNKRSKDEGSKSKKVK.

Belongs to the TRAFAC class TrmE-Era-EngA-EngB-Septin-like GTPase superfamily. EngA (Der) GTPase family. In terms of assembly, associates with the 50S ribosomal subunit.

GTPase that plays an essential role in the late steps of ribosome biogenesis. In Francisella tularensis subsp. tularensis (strain WY96-3418), this protein is GTPase Der.